The primary structure comprises 296 residues: 4-hydroxybenzoate octaprenyltransferase (296 aa).

The next 8 helical transmembrane spans lie at 28–48 (PIGIYLLLWPTLWAVWIAGKG), 52–72 (LKTVFIFVVGVFLMRAAGCVI), 102–122 (ALALFAVLVGLSFVLVLFTNA), 146–166 (YYPQVVLGAAFSWGMPMAFTA), 169–189 (GDLPAAAWLLYIANLLWTVGY), 219–239 (VIILTLQGLALGCLMLAGARF), 241–261 (LGACFYIGLLAAAGCFAWEFW), and 275–295 (FLHNHWAGLAIFLGIVADYAV).

It belongs to the UbiA prenyltransferase family. Mg(2+) serves as cofactor.

It localises to the cell inner membrane. It carries out the reaction all-trans-octaprenyl diphosphate + 4-hydroxybenzoate = 4-hydroxy-3-(all-trans-octaprenyl)benzoate + diphosphate. The protein operates within cofactor biosynthesis; ubiquinone biosynthesis. Functionally, catalyzes the prenylation of para-hydroxybenzoate (PHB) with an all-trans polyprenyl group. Mediates the second step in the final reaction sequence of ubiquinone-8 (UQ-8) biosynthesis, which is the condensation of the polyisoprenoid side chain with PHB, generating the first membrane-bound Q intermediate 3-octaprenyl-4-hydroxybenzoate. The chain is 4-hydroxybenzoate octaprenyltransferase from Pseudomonas savastanoi pv. phaseolicola (strain 1448A / Race 6) (Pseudomonas syringae pv. phaseolicola (strain 1448A / Race 6)).